The primary structure comprises 406 residues: COP9 signalosome complex subunit 4 (406 aa).

The PCI domain maps to 197-366; it reads YRRKFIEAAQ…GIVHFETREP (170 aa).

Belongs to the CSN4 family. As to quaternary structure, component of the CSN complex, probably composed of cops1, cops2, cops3, cops4, cops5, cops6, cops7, cops8 and cops9.

The protein resides in the cytoplasm. It localises to the nucleus. It is found in the cytoplasmic vesicle. Its subcellular location is the secretory vesicle. The protein localises to the synaptic vesicle. Functionally, component of the COP9 signalosome complex (CSN), a complex involved in various cellular and developmental processes. The CSN complex is an essential regulator of the ubiquitin (Ubl) conjugation pathway by mediating the deneddylation of the cullin subunits of E3 ligase complexes, leading to modify the Ubl ligase activity. This chain is COP9 signalosome complex subunit 4 (cops4), found in Danio rerio (Zebrafish).